The chain runs to 140 residues: Nucleoside diphosphate kinase (140 aa).

ATP contacts are provided by Lys9, Phe57, Arg85, Thr91, Arg102, and Asn112. His115 acts as the Pros-phosphohistidine intermediate in catalysis.

The protein belongs to the NDK family. As to quaternary structure, homotetramer. Mg(2+) serves as cofactor.

Its subcellular location is the cytoplasm. It catalyses the reaction a 2'-deoxyribonucleoside 5'-diphosphate + ATP = a 2'-deoxyribonucleoside 5'-triphosphate + ADP. It carries out the reaction a ribonucleoside 5'-diphosphate + ATP = a ribonucleoside 5'-triphosphate + ADP. Functionally, major role in the synthesis of nucleoside triphosphates other than ATP. The ATP gamma phosphate is transferred to the NDP beta phosphate via a ping-pong mechanism, using a phosphorylated active-site intermediate. This is Nucleoside diphosphate kinase from Chlorobium luteolum (strain DSM 273 / BCRC 81028 / 2530) (Pelodictyon luteolum).